Here is a 162-residue protein sequence, read N- to C-terminus: Heat shock protein beta-6 (162 aa).

The involved in stabilization of the HSPB1:HSBP6 heterodimer stretch occupies residues 1–72 (MEIPVPVQPS…PTAQVSTDSG (72 aa)). S16 carries the post-translational modification Phosphoserine. The region spanning 56 to 162 (RAPSVALPTA…AQLPSPPAAK (107 aa)) is the sHSP domain. At Q66 the chain carries Deamidated glutamine. Phosphoserine is present on S157.

This sequence belongs to the small heat shock protein (HSP20) family. As to quaternary structure, homodimer. Small heat shock proteins form high molecular mass oligomers containing variable number of monomers; these oligomers display a very flexible quaternary structure easily exchanging their subunits. Heterooligomer with HSPB1; formed through oligomerization of HSPB1:HSBP6 dimers; subunit exchange leads to formation of at least two different heterooligomeric complexes, differing in variable quantities of HSPB1 and HSPB6 homodimers in addition to HSPB1:HSPB6 heterodimers. Heterooligomer with CRYAB; large heterooligomers consist of CRYAB homodimers and HSPB5:HSPB6 heterodimers but lacking HSPB6 homodimers. Interacts with BAG3. Interacts (phosphorylated) with YWHAZ. Interacts with PDE4A and PDE4D; required for maintenance of the non-phosphorylated state of HSPB6 under basal conditions. Interacts with KDR. Interacts with PRKD1. Phosphorylated at Ser-16 by PKA and probably PKD1K; required to protect cardiomyocytes from apoptosis.

Its subcellular location is the cytoplasm. It is found in the nucleus. It localises to the secreted. Functionally, small heat shock protein which functions as a molecular chaperone probably maintaining denatured proteins in a folding-competent state. Seems to have versatile functions in various biological processes. Plays a role in regulating muscle function such as smooth muscle vasorelaxation and cardiac myocyte contractility. May regulate myocardial angiogenesis implicating KDR. Overexpression mediates cardioprotection and angiogenesis after induced damage. Stabilizes monomeric YWHAZ thereby supporting YWHAZ chaperone-like activity. In Mus musculus (Mouse), this protein is Heat shock protein beta-6 (Hspb6).